The sequence spans 9518 residues: Nonribosomal peptide synthetase ungA' (9518 aa).

An adenylation 1 region spans residues 214–611 (ERARETPNAP…ARKDDQVKVR (398 aa)). Residues 738 to 814 (APRTEMEWRL…DLAEVARLEQ (77 aa)) form the Carrier 1 domain. The residue at position 775 (S775) is an O-(pantetheine 4'-phosphoryl)serine. The segment at 853-1250 (DLLPCSPLQE…EEVLRQISRE (398 aa)) is condensation 1. An adenylation 2 region spans residues 1292–1695 (QRVQEQPDRP…GRKDTQVKIR (404 aa)). In terms of domain architecture, Carrier 2 spans 1822 to 1898 (LPQTELERRL…RLAHCSQTEQ (77 aa)). S1859 is modified (O-(pantetheine 4'-phosphoryl)serine). The tract at residues 1911-2336 (TFALSPIQQL…QRSLEVVAKE (426 aa)) is epimerization 1. Positions 2376 to 2803 (EDIYPCSPVQ…DNLQIASSQD (428 aa)) are condensation 2. The interval 2829–3224 (RIQQQPEAPA…NRKDNQVKIR (396 aa)) is adenylation 3. The region spanning 3352-3428 (APATASEQRL…DMAQTLKVES (77 aa)) is the Carrier 3 domain. At S3389 the chain carries O-(pantetheine 4'-phosphoryl)serine. The interval 3465 to 3869 (EDVLPCTPLQ…QVCKEASQYL (405 aa)) is condensation 3. Residues 3906 to 4307 (QQAHQRPNAS…GRRDAQVKIR (402 aa)) are adenylation 4. Positions 4436 to 4512 (TPTTITECRI…RLAACTTPVD (77 aa)) constitute a Carrier 4 domain. S4473 carries the O-(pantetheine 4'-phosphoryl)serine modification. The tract at residues 4527-4954 (ALSPIQQLFV…EDAAQELPSL (428 aa)) is epimerization 2. The interval 4990–5411 (VEDIYPCSPI…ANLISKEDLR (422 aa)) is condensation 4. The interval 5433-5829 (SEQAQNQPDA…GRKDGQVKIR (397 aa)) is adenylation 5. In terms of domain architecture, Carrier 5 spans 5957–6033 (VASSPVELAL…QLAKNSGLQA (77 aa)). Residue S5994 is modified to O-(pantetheine 4'-phosphoryl)serine. Residues 6050–6470 (ELSPIQRMFF…CEHSLVMAAH (421 aa)) form an epimerization 3 region. A condensation 5 region spans residues 6512-6856 (VEDIYPCTPI…TGISVQNNAS (345 aa)). The segment at 6947–7338 (LRPNSSAIHA…GRKDSQVKVR (392 aa)) is adenylation 6. The Carrier 6 domain occupies 7464-7540 (LPRTEVEMQL…GLAPSAASQA (77 aa)). O-(pantetheine 4'-phosphoryl)serine is present on S7501. Residues 7555 to 7978 (ELSPIQQMFI…LQTAARELPH (424 aa)) are epimerization 4. The segment at 8016 to 8444 (VEDIYPLTPI…QVDLAGRHDQ (429 aa)) is condensation 6. Residues 8468–8867 (MQCQQRPDAT…SRKDAQVKIR (400 aa)) form an adenylation 7 region. Residues 8995–9071 (PLTTEMEWRL…DMAHYLREGQ (77 aa)) enclose the Carrier 7 domain. S9032 is modified (O-(pantetheine 4'-phosphoryl)serine). A condensation 7 region spans residues 9111-9454 (DVYPTTELQD…DNLEHDAGTS (344 aa)).

Belongs to the NRP synthetase family.

Its pathway is secondary metabolite biosynthesis. Nonribosomal peptide synthetase; part of the gene cluster that mediates the biosynthesis of the unguisins, gamma-aminobutyric acid (GABA)-containing fungal cyclic heptapeptides with the amino acid sequence cyclo-(D-Ala1-D-Val2-L-Leu3-beta-MePhe4-D-Ala5-D-Trp6-GABA7) for unguisin H and cyclo-(D-Ala1-D-Ala2-L-Leu3-beta-MePhe4-D-Ala5-D-Trp6-GABA7) for unguisin I. UngA' is the main enzyme within the cluster which condenses the 7 residues using its respective 7 modules. The terminal condensation domain (Ct) is involved in cyclization with D-alanine and thereby releasing of unguisins H and I. The alanine racemase ungC' provides D-alanine, which is then accepted by the first adenylation domain of ungA', whereas the methyltransferase ungE' provides the (2R,3R)-beta-methylphenylalanine residue incorporated by the module 4. Finally, the hydrolase ungD' catalyzes the hydrolysis between the D-tryptophan and GABA residues of unguisins H and I to produce the corresponding linear peptides. In Aspergillus campestris (strain IBT 28561), this protein is Nonribosomal peptide synthetase ungA'.